Consider the following 230-residue polypeptide: Androgen-dependent TFPI-regulating protein (230 aa).

The Cytoplasmic portion of the chain corresponds to 1 to 7; that stretch reads MTKTTTC. A helical membrane pass occupies residues 8-28; that stretch reads LYHFVVLNWYIFLNYYIPQIG. Over 29–45 the chain is Extracellular; sequence KDEEKLKEFHDGGRSKY. A helical transmembrane segment spans residues 46–66; the sequence is LTLLNLLLQAVFFGVACLDDV. Over 67–85 the chain is Cytoplasmic; that stretch reads LKRVIGRKDIKFITYFRDL. A helical membrane pass occupies residues 86–106; that stretch reads LFTTLAFPLSTFVFLVFWSLF. The Extracellular portion of the chain corresponds to 107–120; sequence HYDRSLVYPKGLDD. A helical membrane pass occupies residues 121–141; sequence FFPAWVNHAMHTSIFPFSLAE. The Cytoplasmic segment spans residues 142–155; sequence TVLRPHNYPSKKLG. A helical membrane pass occupies residues 156–173; the sequence is LSLLGACNFAYIIRILWR. At 174–190 the chain is on the extracellular side; that stretch reads YVQTGNWVYPVFASLSP. A helical membrane pass occupies residues 191 to 211; sequence LGIILFFSASYILSASLYLFG. At 212 to 230 the chain is on the cytoplasmic side; that stretch reads EKINHWKWGATVKPRMKKN.

This sequence belongs to the AIG1 family.

It is found in the cell membrane. The enzyme catalyses 9-hexadecanoyloxy-octadecanoate + H2O = 9-hydroxy-octadecanoate + hexadecanoate + H(+). It carries out the reaction 12-hexadecanoyloxy-octadecanoate + H2O = 12-hydroxyoctadecanoate + hexadecanoate + H(+). The catalysed reaction is 9-(9Z-hexadecenoyloxy)-octadecanoate + H2O = (9Z)-hexadecenoate + 9-hydroxy-octadecanoate + H(+). It catalyses the reaction 12-(9Z-hexadecenoyloxy)-octadecanoate + H2O = 12-hydroxyoctadecanoate + (9Z)-hexadecenoate + H(+). The enzyme catalyses 13-(9Z-hexadecenoyloxy)-octadecanoate + H2O = 13-hydroxy-octadecanoate + (9Z)-hexadecenoate + H(+). It carries out the reaction 9-octadecanoyloxy-octadecanoate + H2O = 9-hydroxy-octadecanoate + octadecanoate + H(+). The catalysed reaction is 12-octadecanoyloxy-octadecanoate + H2O = 12-hydroxyoctadecanoate + octadecanoate + H(+). It catalyses the reaction 13-octadecanoyloxy-octadecanoate + H2O = 13-hydroxy-octadecanoate + octadecanoate + H(+). The enzyme catalyses 9-(9Z-octadecenoyloxy)-octadecanoate + H2O = 9-hydroxy-octadecanoate + (9Z)-octadecenoate + H(+). It carries out the reaction 12-(9Z-octadecenoyloxy)-octadecanoate + H2O = 12-hydroxyoctadecanoate + (9Z)-octadecenoate + H(+). The catalysed reaction is 13-(9Z-octadecenoyloxy)-octadecanoate + H2O = 13-hydroxy-octadecanoate + (9Z)-octadecenoate + H(+). It catalyses the reaction 5-(9Z-octadecenoyloxy)-octadecanoate + H2O = 5-hydroxy-octadecanoate + (9Z)-octadecenoate + H(+). Its function is as follows. Hydrolyzes bioactive fatty-acid esters of hydroxy-fatty acids (FAHFAs), but not other major classes of lipids. Shows a preference for FAHFAs with branching distal from the carboxylate head group of the lipids. Regulates the expression and the cell-associated anticoagulant activity of the inhibitor TFPI in endothelial cells (in vitro). This chain is Androgen-dependent TFPI-regulating protein (Adtrp), found in Rattus norvegicus (Rat).